The sequence spans 270 residues: Proteasome subunit beta (270 aa).

The propeptide at 1–47 is removed in mature form; by autocatalysis; sequence MSNRGRLGDAFLRPGSSSFLDFLSDHAPELLPGRSAAAGNAPLAPHA. T48 serves as the catalytic Nucleophile.

This sequence belongs to the peptidase T1B family. The 20S proteasome core is composed of 14 alpha and 14 beta subunits that assemble into four stacked heptameric rings, resulting in a barrel-shaped structure. The two inner rings, each composed of seven catalytic beta subunits, are sandwiched by two outer rings, each composed of seven alpha subunits. The catalytic chamber with the active sites is on the inside of the barrel. Has a gated structure, the ends of the cylinder being occluded by the N-termini of the alpha-subunits. Is capped by the proteasome-associated ATPase, ARC.

The protein localises to the cytoplasm. It catalyses the reaction Cleavage of peptide bonds with very broad specificity.. It participates in protein degradation; proteasomal Pup-dependent pathway. With respect to regulation, the formation of the proteasomal ATPase ARC-20S proteasome complex, likely via the docking of the C-termini of ARC into the intersubunit pockets in the alpha-rings, may trigger opening of the gate for substrate entry. Interconversion between the open-gate and close-gate conformations leads to a dynamic regulation of the 20S proteasome proteolysis activity. In terms of biological role, component of the proteasome core, a large protease complex with broad specificity involved in protein degradation. This chain is Proteasome subunit beta, found in Xylanimonas cellulosilytica (strain DSM 15894 / JCM 12276 / CECT 5975 / KCTC 9989 / LMG 20990 / NBRC 107835 / XIL07).